A 135-amino-acid chain; its full sequence is Ribosome-binding factor A (135 aa).

This sequence belongs to the RbfA family. As to quaternary structure, monomer. Binds 30S ribosomal subunits, but not 50S ribosomal subunits or 70S ribosomes.

It localises to the cytoplasm. One of several proteins that assist in the late maturation steps of the functional core of the 30S ribosomal subunit. Associates with free 30S ribosomal subunits (but not with 30S subunits that are part of 70S ribosomes or polysomes). Required for efficient processing of 16S rRNA. May interact with the 5'-terminal helix region of 16S rRNA. The protein is Ribosome-binding factor A of Caldicellulosiruptor saccharolyticus (strain ATCC 43494 / DSM 8903 / Tp8T 6331).